A 279-amino-acid chain; its full sequence is Thymidylate synthase (279 aa).

141–142 serves as a coordination point for dUMP; sequence RR. Catalysis depends on C161, which acts as the Nucleophile. DUMP is bound by residues 181–184, N192, and 222–224; these read RSND and HVY. Residue D184 participates in (6R)-5,10-methylene-5,6,7,8-tetrahydrofolate binding. (6R)-5,10-methylene-5,6,7,8-tetrahydrofolate is bound at residue A278.

It belongs to the thymidylate synthase family. Bacterial-type ThyA subfamily. Homodimer.

It localises to the cytoplasm. It catalyses the reaction dUMP + (6R)-5,10-methylene-5,6,7,8-tetrahydrofolate = 7,8-dihydrofolate + dTMP. Its pathway is pyrimidine metabolism; dTTP biosynthesis. Catalyzes the reductive methylation of 2'-deoxyuridine-5'-monophosphate (dUMP) to 2'-deoxythymidine-5'-monophosphate (dTMP) while utilizing 5,10-methylenetetrahydrofolate (mTHF) as the methyl donor and reductant in the reaction, yielding dihydrofolate (DHF) as a by-product. This enzymatic reaction provides an intracellular de novo source of dTMP, an essential precursor for DNA biosynthesis. The protein is Thymidylate synthase of Bacillus subtilis subsp. natto.